Here is a 364-residue protein sequence, read N- to C-terminus: Methylthioribose-1-phosphate isomerase (364 aa).

Substrate-binding positions include 53-55 (RGA), arginine 90, and glutamine 200. Aspartate 241 (proton donor) is an active-site residue. 251–252 (NK) provides a ligand contact to substrate.

The protein belongs to the eIF-2B alpha/beta/delta subunits family. MtnA subfamily.

It carries out the reaction 5-(methylsulfanyl)-alpha-D-ribose 1-phosphate = 5-(methylsulfanyl)-D-ribulose 1-phosphate. The protein operates within amino-acid biosynthesis; L-methionine biosynthesis via salvage pathway; L-methionine from S-methyl-5-thio-alpha-D-ribose 1-phosphate: step 1/6. Functionally, catalyzes the interconversion of methylthioribose-1-phosphate (MTR-1-P) into methylthioribulose-1-phosphate (MTRu-1-P). This chain is Methylthioribose-1-phosphate isomerase, found in Methylobacterium nodulans (strain LMG 21967 / CNCM I-2342 / ORS 2060).